An 813-amino-acid chain; its full sequence is G-type lectin S-receptor-like serine/threonine-protein kinase LECRK1 (813 aa).

An N-terminal signal peptide occupies residues 1–19 (MVALLLFPMLLQLLSPTCA). The Extracellular segment spans residues 20–466 (QTQKNITLGS…NRKHWVLGSS (447 aa)). In terms of domain architecture, Bulb-type lectin spans 22-149 (QKNITLGSTL…DGTTKWQTFD (128 aa)). N-linked (GlcNAc...) asparagine glycosylation is found at Asn-24, Asn-57, Asn-164, Asn-168, Asn-219, and Asn-242. The 54-residue stretch at 293 to 346 (PQNICHAIVSDVGSGVCGFNSYCTFDGTRNQIASCQCPPWYKFFDEQKKYKGCK) folds into the EGF-like; atypical domain. 5 disulfides stabilise this stretch: Cys-297–Cys-315, Cys-309–Cys-327, Cys-329–Cys-345, Cys-391–Cys-413, and Cys-395–Cys-401. Positions 354–433 (CDLEEATALA…NMADYVQRTV (80 aa)) constitute a PAN domain. N-linked (GlcNAc...) asparagine glycosylation is found at Asn-407 and Asn-441. Residues 467-487 (LILGTSILVNFALISIFLFGT) traverse the membrane as a helical segment. At 488-813 (YCRITTKKNI…DPCSFISSLP (326 aa)) the chain is on the cytoplasmic side. One can recognise a Protein kinase domain in the interval 523 to 797 (AGFHEILGAG…KVTQMLDGAV (275 aa)). ATP is bound by residues 529–537 (LGAGASGVV) and Lys-553. The Proton acceptor role is filled by Asp-647.

This sequence belongs to the protein kinase superfamily. Ser/Thr protein kinase family. Interacts (via kinase domain) with ADF4. In terms of tissue distribution, expressed in plumules, radicles and panicles.

It localises to the membrane. It catalyses the reaction L-seryl-[protein] + ATP = O-phospho-L-seryl-[protein] + ADP + H(+). The catalysed reaction is L-threonyl-[protein] + ATP = O-phospho-L-threonyl-[protein] + ADP + H(+). Involved in innate immunity. Required for the expression of defense-related genes PR1A, LOX2 and CHS1 upon biotic stresses. Required for basal resistance to the fungal blast (M.grisea), bacterial blight (O.oryzae pv. oryzae, Xoo) and the herbivorous insect brown planthopper (N.lugens, BPH). May be involved in several defense signaling pathways. Involved in the promotion of seed germination. Required for the expression of alpha-amylase genes during seed germination. Involved in resistance against the brown planthopper (BPH). Member of the BPH3 (BPH resistance locus 3) cluster which contains LECRK1, LECRK2 and LECRK3. This chain is G-type lectin S-receptor-like serine/threonine-protein kinase LECRK1, found in Oryza sativa subsp. indica (Rice).